Consider the following 130-residue polypeptide: Anti-adapter protein IraD (130 aa).

This sequence belongs to the GpW/Gp25 family. IraD subfamily. In terms of assembly, interacts with RssB.

It is found in the cytoplasm. Functionally, inhibits RpoS proteolysis by regulating RssB activity, thereby increasing the stability of the sigma stress factor RpoS during oxidative stress. Its effect on RpoS stability is due to its interaction with RssB, which probably blocks the interaction of RssB with RpoS, and the consequent delivery of the RssB-RpoS complex to the ClpXP protein degradation pathway. In Escherichia coli O45:K1 (strain S88 / ExPEC), this protein is Anti-adapter protein IraD.